We begin with the raw amino-acid sequence, 250 residues long: MLMRQKGIIIKAVDYGESDKIITILNEHGAKVPLMARRAKKVKTGLQAQTQLFVYGLFIYNQWRGMGTLNSVDVISQHYKLQMDLYVSSYAALAAETIERSMDEGDIAPYNYQLLQFVLEKIESGTSAQLMSVVVMLKCMKRFGFTASFNRCAVSGNDTQADLIGYSFKFDGAISRQEASKDVHAVILSNKTLYLLDVLQKLPIDKMNSLNIHQEIIDEMSDIILMLYREYAGMFFKSQKLINQLKRLEQ.

Belongs to the RecO family.

Involved in DNA repair and RecF pathway recombination. The polypeptide is DNA repair protein RecO (Staphylococcus aureus (strain COL)).